Here is a 91-residue protein sequence, read N- to C-terminus: Putative transmembrane protein ORF91a (91 aa).

3 helical membrane-spanning segments follow: residues 17–37, 40–60, and 69–89; these read TGISFDSITGAIIAGVVVGLA, AFLGKFPDYVEVLIGVGLLFM, and GIGFVLTADGIYGLIKNYIST.

It localises to the host membrane. This is Putative transmembrane protein ORF91a from Acidianus convivator (ABV).